We begin with the raw amino-acid sequence, 467 residues long: Cysteine--tRNA ligase (467 aa).

C27 provides a ligand contact to Zn(2+). Positions 29-39 match the 'HIGH' region motif; the sequence is PTVYNYIHIGN. Zn(2+) is bound by residues C207, H232, and E236. A 'KMSKS' region motif is present at residues 264–268; sequence KMSKS. K267 provides a ligand contact to ATP.

Belongs to the class-I aminoacyl-tRNA synthetase family. As to quaternary structure, monomer. The cofactor is Zn(2+).

It localises to the cytoplasm. It catalyses the reaction tRNA(Cys) + L-cysteine + ATP = L-cysteinyl-tRNA(Cys) + AMP + diphosphate. The polypeptide is Cysteine--tRNA ligase (Caldanaerobacter subterraneus subsp. tengcongensis (strain DSM 15242 / JCM 11007 / NBRC 100824 / MB4) (Thermoanaerobacter tengcongensis)).